The following is a 518-amino-acid chain: Ankyrin repeat and SOCS box protein 3 (518 aa).

ANK repeat units follow at residues 9–38 (DTCS…SVDV), 42–71 (RGWM…SENY), 78–107 (EGFC…DPNA), 111–140 (EETT…NVNG), 145–174 (CGWN…NKEC), 178–207 (FGIT…NVNC), 211–240 (DKAT…DPDL), 246–275 (SWQL…RACD), 279–308 (NKVS…SPDA), 315–346 (GFSS…QINE), and 348–373 (HLAY…SLGP). The SOCS box domain maps to 441–504 (MLSARASNAW…HNYLLYEDVL (64 aa)).

It belongs to the ankyrin SOCS box (ASB) family. As to quaternary structure, interacts with ELOB and TNFRSF1B.

It is found in the cytoplasm. Its pathway is protein modification; protein ubiquitination. Probable substrate-recognition component of a SCF-like ECS (Elongin-Cullin-SOCS-box protein) E3 ubiquitin-protein ligase complex which mediates the ubiquitination and subsequent proteasomal degradation of target proteins. Recognizes TNFRSF1B. Plays a role in the down-regulation of antiviral innate immunity by targeting MAVS for ubiquitin-proteasomal degradation. Also destabilizes TRAF6 by enhancing its 'Lys-48'-linked polyubiquitination. In Homo sapiens (Human), this protein is Ankyrin repeat and SOCS box protein 3 (ASB3).